The chain runs to 215 residues: Sodium channel regulatory subunit beta-3 (215 aa).

A signal peptide spans 1–22; sequence MPAFNRLFPLVSLVLIYWASVC. The Extracellular segment spans residues 23–156; the sequence is FPVCVEVPSE…EEAGEDFTSV (134 aa). The 115-residue stretch at 24–138 folds into the Ig-like C2-type domain; it reads PVCVEVPSET…EAHRPFVKTT (115 aa). 2 cysteine pairs are disulfide-bonded: cysteine 26/cysteine 48 and cysteine 45/cysteine 120. Asparagine 95, asparagine 109, asparagine 113, and asparagine 121 each carry an N-linked (GlcNAc...) asparagine glycan. Residues 157–178 traverse the membrane as a helical segment; sequence VSEIMMYILLVFLTLWLLIEMI. The Cytoplasmic segment spans residues 179–215; that stretch reads YCYRKVSKAEEAAQENASDYLAIPSENKENSAVPVEE.

Belongs to the sodium channel auxiliary subunit SCN3B (TC 8.A.17) family. In terms of assembly, a voltage-gated sodium (Nav) channel consists of an ion-conducting pore-forming alpha subunit functional on its own that is regulated by one or more beta subunits. Forms homodimers and homotrimers. SCN3B is non-covalently associated with alpha subunits and induces the formation of alpha subunit oligomers, including trimers. Interacts with SCN5A/Nav1.5; regulatory subunit of SCN5A/Nav1.5. Interacts with SCN7A/Nav2.1; probable regulatory subunit of SCN7A/Nav2.1. Interacts with SCN10A; regulatory subunit of SCN10A/Nav1.8. Interacts with NFASC; probably involved in targeting the sodium channels to the nodes of Ranvier. Intramolecular disulfide bonds favor the voltage-gated sodium channel oligomeric complex assembly. Post-translationally, N-glycosylated.

The protein resides in the cell membrane. Functionally, regulatory subunit of multiple voltage-gated sodium (Nav) channels directly mediating the depolarization of excitable membranes. Navs, also called VGSCs (voltage-gated sodium channels) or VDSCs (voltage-dependent sodium channels), operate by switching between closed and open conformations depending on the voltage difference across the membrane. In the open conformation they allow Na(+) ions to selectively pass through the pore, along their electrochemical gradient. The influx of Na+ ions provokes membrane depolarization, initiating the propagation of electrical signals throughout cells and tissues. The accessory beta subunits participate in localization and functional modulation of the Nav channels. Modulates the activity of SCN2A/Nav1.2, causing a hyperpolarizing shift in the voltage-dependence of inactivation of the channel and increasing the fraction of channels operating in the fast gating mode. Modulates the activity of SCN5A/Nav1.5. Could also regulate the atypical sodium channel SCN7A/Nav2.1. Modulates the activity of SCN10A/Nav1.8, regulating its oligomerization and accelerating the recovery from inactivation. This is Sodium channel regulatory subunit beta-3 from Macaca fascicularis (Crab-eating macaque).